We begin with the raw amino-acid sequence, 333 residues long: MKILIKLWTNLINRISNKKYLAAVSGGPDSMAMLNMYKRNIRVVCHVNYHKRESSDRDQQIVVDFCRKNNLIIEILDVDEKVYERYGHIDNFQTKARLIRYDFFKEIGKKYNIENLYIAHNFDDFLETAYMQRARQSKALFYGIKESNVINGIIVKRPVLFVRKQTLQRYCDENKIKYGIDETNELDIYERNRVRKIISSWSLNEVYDFKKFVIKYNKEHSSFANFIDLSYIEFKKNKYKYDYFIRQDDMVQYYLIYYFLIDHKIINPSENKIISLIKFFGKQINKEKAYRVQENIYMHVNDDELISLISYNKSDNISNSNVDIIDDHNVIEK.

Residue 25–30 (SGGPDS) coordinates ATP.

It belongs to the tRNA(Ile)-lysidine synthase family.

The protein resides in the cytoplasm. The catalysed reaction is cytidine(34) in tRNA(Ile2) + L-lysine + ATP = lysidine(34) in tRNA(Ile2) + AMP + diphosphate + H(+). Ligates lysine onto the cytidine present at position 34 of the AUA codon-specific tRNA(Ile) that contains the anticodon CAU, in an ATP-dependent manner. Cytidine is converted to lysidine, thus changing the amino acid specificity of the tRNA from methionine to isoleucine. This chain is tRNA(Ile)-lysidine synthase, found in Ureaplasma parvum serovar 3 (strain ATCC 700970).